The following is a 420-amino-acid chain: Dynein axonemal assembly factor 4 (420 aa).

The CS domain occupies 3–87; the sequence is LQVSDYSWQQ…KEAAMWETLS (85 aa). Residues 7-103 form a mediates interaction with ESR1 and STUB1 region; the sequence is DYSWQQTKTA…EMMQRIREKS (97 aa). 3 TPR repeats span residues 290-323, 324-357, and 366-399; these read PEWL…NNKM, PLLY…LMPP, and MKAH…DPSN.

As to quaternary structure, interacts with ZMYND10. Interacts with STUB1. Interacts with ESR1 and ESR2. Interacts with DNAAF2. Interacts with CCT3, CCT4, CCT5 and CCT8. Interacts with DNAAF6/PIH1D3.

The protein resides in the nucleus. Its subcellular location is the cytoplasm. The protein localises to the cell projection. It localises to the neuron projection. It is found in the dynein axonemal particle. Functionally, involved in neuronal migration during development of the cerebral neocortex. May regulate the stability and proteasomal degradation of the estrogen receptors that play an important role in neuronal differentiation, survival and plasticity. Axonemal dynein assembly factor required for ciliary motility. This Pan troglodytes (Chimpanzee) protein is Dynein axonemal assembly factor 4.